Consider the following 356-residue polypeptide: Putative methylthioribose-1-phosphate isomerase (356 aa).

Substrate is bound by residues 57–59 (RGA), arginine 100, and glutamine 206. The Proton donor role is filled by aspartate 247. 257 to 258 (NK) contributes to the substrate binding site.

Belongs to the eIF-2B alpha/beta/delta subunits family. MtnA subfamily.

The enzyme catalyses 5-(methylsulfanyl)-alpha-D-ribose 1-phosphate = 5-(methylsulfanyl)-D-ribulose 1-phosphate. Its function is as follows. Catalyzes the interconversion of methylthioribose-1-phosphate (MTR-1-P) into methylthioribulose-1-phosphate (MTRu-1-P). The protein is Putative methylthioribose-1-phosphate isomerase (aIF-2BI) of Pyrococcus abyssi (strain GE5 / Orsay).